The sequence spans 1020 residues: Protein translocase subunit SecA (1020 aa).

Residues glutamine 99, 117–121 (GEGKT), and aspartate 633 contribute to the ATP site. A disordered region spans residues 963–992 (NEQPSQEMAADEETQEESKIEENKPEPIVV). The span at 978 to 987 (EESKIEENKP) shows a compositional bias: basic and acidic residues. Positions 1002, 1004, 1013, and 1014 each coordinate Zn(2+).

Belongs to the SecA family. Monomer and homodimer. Part of the essential Sec protein translocation apparatus which comprises SecA, SecYEG and auxiliary proteins SecDF. Other proteins may also be involved. It depends on Zn(2+) as a cofactor.

The protein localises to the cell inner membrane. Its subcellular location is the cytoplasm. It catalyses the reaction ATP + H2O + cellular proteinSide 1 = ADP + phosphate + cellular proteinSide 2.. In terms of biological role, part of the Sec protein translocase complex. Interacts with the SecYEG preprotein conducting channel. Has a central role in coupling the hydrolysis of ATP to the transfer of proteins into and across the cell membrane, serving as an ATP-driven molecular motor driving the stepwise translocation of polypeptide chains across the membrane. The protein is Protein translocase subunit SecA of Protochlamydia amoebophila (strain UWE25).